A 320-amino-acid polypeptide reads, in one-letter code: Polyisoprenyl-teichoic acid--peptidoglycan teichoic acid transferase TagU (320 aa).

Residues 1–15 (MVSRTERKQHKKRRK) are Cytoplasmic-facing. Residues 16–36 (WPFWLGGILLVLLLLISGGIF) traverse the membrane as a helical; Signal-anchor for type II membrane protein segment. Residues 37-320 (LIYNQVGAVV…SEITGHMQEQ (284 aa)) lie on the Extracellular side of the membrane.

It belongs to the LytR/CpsA/Psr (LCP) family.

It localises to the cell membrane. Its pathway is cell wall biogenesis. Its function is as follows. May catalyze the final step in cell wall teichoic acid biosynthesis, the transfer of the anionic cell wall polymers (APs) from their lipid-linked precursor to the cell wall peptidoglycan (PG). This Oceanobacillus iheyensis (strain DSM 14371 / CIP 107618 / JCM 11309 / KCTC 3954 / HTE831) protein is Polyisoprenyl-teichoic acid--peptidoglycan teichoic acid transferase TagU.